The sequence spans 150 residues: D-aminoacyl-tRNA deacylase (150 aa).

The Gly-cisPro motif, important for rejection of L-amino acids motif lies at 138–139 (GP).

Belongs to the DTD family. In terms of assembly, homodimer.

It localises to the cytoplasm. It catalyses the reaction glycyl-tRNA(Ala) + H2O = tRNA(Ala) + glycine + H(+). It carries out the reaction a D-aminoacyl-tRNA + H2O = a tRNA + a D-alpha-amino acid + H(+). In terms of biological role, an aminoacyl-tRNA editing enzyme that deacylates mischarged D-aminoacyl-tRNAs. Also deacylates mischarged glycyl-tRNA(Ala), protecting cells against glycine mischarging by AlaRS. Acts via tRNA-based rather than protein-based catalysis; rejects L-amino acids rather than detecting D-amino acids in the active site. By recycling D-aminoacyl-tRNA to D-amino acids and free tRNA molecules, this enzyme counteracts the toxicity associated with the formation of D-aminoacyl-tRNA entities in vivo and helps enforce protein L-homochirality. The polypeptide is D-aminoacyl-tRNA deacylase (Chlorobium phaeobacteroides (strain DSM 266 / SMG 266 / 2430)).